The following is a 240-amino-acid chain: UDP-2,3-diacylglucosamine hydrolase (240 aa).

Mn(2+) contacts are provided by aspartate 8, histidine 10, aspartate 41, asparagine 79, and histidine 114. Position 79–80 (asparagine 79–arginine 80) interacts with substrate. The substrate site is built by aspartate 122, serine 160, asparagine 164, lysine 167, and histidine 195. Histidine 195 and histidine 197 together coordinate Mn(2+).

This sequence belongs to the LpxH family. The cofactor is Mn(2+).

Its subcellular location is the cell inner membrane. The enzyme catalyses UDP-2-N,3-O-bis[(3R)-3-hydroxytetradecanoyl]-alpha-D-glucosamine + H2O = 2-N,3-O-bis[(3R)-3-hydroxytetradecanoyl]-alpha-D-glucosaminyl 1-phosphate + UMP + 2 H(+). Its pathway is glycolipid biosynthesis; lipid IV(A) biosynthesis; lipid IV(A) from (3R)-3-hydroxytetradecanoyl-[acyl-carrier-protein] and UDP-N-acetyl-alpha-D-glucosamine: step 4/6. Its function is as follows. Hydrolyzes the pyrophosphate bond of UDP-2,3-diacylglucosamine to yield 2,3-diacylglucosamine 1-phosphate (lipid X) and UMP by catalyzing the attack of water at the alpha-P atom. Involved in the biosynthesis of lipid A, a phosphorylated glycolipid that anchors the lipopolysaccharide to the outer membrane of the cell. This is UDP-2,3-diacylglucosamine hydrolase from Escherichia coli O6:H1 (strain CFT073 / ATCC 700928 / UPEC).